Here is a 412-residue protein sequence, read N- to C-terminus: Phosphoglycerate kinase (412 aa).

Residues 22-24, R37, 60-63, R120, and R172 each bind substrate; these read DFN and HLGK. Residues K223, G310, E341, and 368 to 371 each bind ATP; that span reads GGDS.

This sequence belongs to the phosphoglycerate kinase family. Monomer.

Its subcellular location is the cytoplasm. It catalyses the reaction (2R)-3-phosphoglycerate + ATP = (2R)-3-phospho-glyceroyl phosphate + ADP. Its pathway is carbohydrate degradation; glycolysis; pyruvate from D-glyceraldehyde 3-phosphate: step 2/5. This Spiroplasma citri protein is Phosphoglycerate kinase.